The chain runs to 268 residues: Inositol monophosphatase 3 (268 aa).

Mg(2+)-binding residues include glutamate 71, aspartate 91, leucine 93, and aspartate 94. Substrate is bound at residue glutamate 71. Residues 93–96 (LDGT), 194–196 (GSC), glutamate 213, and aspartate 221 contribute to the substrate site. Aspartate 221 is a Mg(2+) binding site.

Belongs to the inositol monophosphatase superfamily. Mg(2+) serves as cofactor. As to expression, expressed in the shoot apex, roots, stems, leaves, flowers and young and mature green fruits.

The catalysed reaction is a myo-inositol phosphate + H2O = myo-inositol + phosphate. It functions in the pathway polyol metabolism; myo-inositol biosynthesis; myo-inositol from D-glucose 6-phosphate: step 2/2. Responsible for the provision of inositol required for synthesis of phosphatidylinositol and polyphosphoinositides. In Solanum lycopersicum (Tomato), this protein is Inositol monophosphatase 3 (IMP3).